The following is a 173-amino-acid chain: Photosystem I assembly protein Ycf3 (173 aa).

TPR repeat units lie at residues 35 to 68, 72 to 105, and 120 to 153; these read AYIYYRDGLAAQNNGDYSEALEYYKESLLLEENK, GETLKNMAIIYMSNGEEDLSIETYEKALVENPKQ, and GRNAEQNGDLDQRDIWFDKAAEVWSKAVRLYPGG.

It belongs to the Ycf3 family.

The protein localises to the cellular thylakoid membrane. In terms of biological role, essential for the assembly of the photosystem I (PSI) complex. May act as a chaperone-like factor to guide the assembly of the PSI subunits. The chain is Photosystem I assembly protein Ycf3 from Prochlorococcus marinus (strain MIT 9301).